A 376-amino-acid chain; its full sequence is Alanine racemase (376 aa).

Residue lysine 40 is the Proton acceptor; specific for D-alanine of the active site. An N6-(pyridoxal phosphate)lysine modification is found at lysine 40. Arginine 138 serves as a coordination point for substrate. Tyrosine 270 functions as the Proton acceptor; specific for L-alanine in the catalytic mechanism. Residue methionine 317 participates in substrate binding.

This sequence belongs to the alanine racemase family. Pyridoxal 5'-phosphate is required as a cofactor.

It catalyses the reaction L-alanine = D-alanine. The protein operates within amino-acid biosynthesis; D-alanine biosynthesis; D-alanine from L-alanine: step 1/1. In terms of biological role, catalyzes the interconversion of L-alanine and D-alanine. May also act on other amino acids. The protein is Alanine racemase (alr) of Lactobacillus acidophilus (strain ATCC 700396 / NCK56 / N2 / NCFM).